We begin with the raw amino-acid sequence, 123 residues long: Ribosome-binding factor A (123 aa).

It belongs to the RbfA family. In terms of assembly, monomer. Binds 30S ribosomal subunits, but not 50S ribosomal subunits or 70S ribosomes.

It is found in the cytoplasm. Functionally, one of several proteins that assist in the late maturation steps of the functional core of the 30S ribosomal subunit. Associates with free 30S ribosomal subunits (but not with 30S subunits that are part of 70S ribosomes or polysomes). Required for efficient processing of 16S rRNA. May interact with the 5'-terminal helix region of 16S rRNA. This Neisseria meningitidis serogroup A / serotype 4A (strain DSM 15465 / Z2491) protein is Ribosome-binding factor A.